Consider the following 866-residue polypeptide: Primer-independent DNA polymerase PolB (866 aa).

Residues 50-286 (SDLTLHIGFD…DRVPATIGAM (237 aa)) are exonuclease domain. The palm1 domain stretch occupies residues 287–385 (AVSRFTKTLK…GLLDILTPDY (99 aa)). Positions 386–481 (GNIRLSKNPD…NSESTSVFLP (96 aa)) are TPR1 domain. The interval 482-522 (FVQQVRENRNRHIKGSLEEKFWKEIGNSLYGKLAQGLRAKT) is fingers domain. The interval 523–549 (AFDTARGLNRSLPPSSVTQPFFAAHVT) is TPR2 domain. The palm2 domain stretch occupies residues 550-678 (GFIRAVVGEL…PGQTLSRSTL (129 aa)). Residues 679–866 (ISTREMWLSE…RKYPTFCLPV (188 aa)) are thumb domain.

It depends on Mn(2+) as a cofactor.

It catalyses the reaction DNA(n) + a 2'-deoxyribonucleoside 5'-triphosphate = DNA(n+1) + diphosphate. In terms of biological role, DNA polymerase with primer-independent templated DNA polymerization activity, primer-dependent DNA polymerization activity with strand displacement, translesion synthesis activity across non-bulky base damage, 3'-5' exodeoxyribonuclease activity, and de novo primer synthesis activity. The enzyme is processive and faithful. Translation synthesis across abasic sites is coupled to de novo primer synthesis. Overexpression of wild-type protein increases survival of cells upon mitomycin C or UV treatment. The chain is Primer-independent DNA polymerase PolB (pi-polB) from Escherichia coli.